The sequence spans 118 residues: Large ribosomal subunit protein bL20 (118 aa).

It belongs to the bacterial ribosomal protein bL20 family.

Its function is as follows. Binds directly to 23S ribosomal RNA and is necessary for the in vitro assembly process of the 50S ribosomal subunit. It is not involved in the protein synthesizing functions of that subunit. The protein is Large ribosomal subunit protein bL20 of Gluconobacter oxydans (strain 621H) (Gluconobacter suboxydans).